The following is a 553-amino-acid chain: Methyl-coenzyme M reductase II subunit alpha (553 aa).

Q150 is a coenzyme F430 binding site. Coenzyme B is bound by residues R228, 259-260 (KH), and R273. H260 bears the Pros-methylhistidine mark. R274 is modified (5-methylarginine). Y335 is a coenzyme M binding site. Q402 bears the 2-methylglutamine mark. Coenzyme M is bound at residue Y446. At G447 the chain carries 1-thioglycine. At D452 the chain carries (Z)-2,3-didehydroaspartate. The residue at position 454 (C454) is an S-methylcysteine.

The protein belongs to the methyl-coenzyme M reductase alpha subunit family. In terms of assembly, MCR is a hexamer of two alpha, two beta, and two gamma chains, forming a dimer of heterotrimers. The cofactor is coenzyme F430. In terms of processing, the alpha subunit contains six modified amino acids near the active site region. Is methylated on His-260, Arg-274, Gln-402 and Cys-454, probably by the action of specific S-adenosylmethionine-dependent methyltransferases. Also contains a thioglycine at position 447, forming a thiopeptide bond. Contains a didehydroaspartate residue at position 452. The methylation on C5 of Arg-274 is a post-translational methylation not essential in vivo, but which plays a role for the stability and structural integrity of MCR.

The enzyme catalyses coenzyme B + methyl-coenzyme M = methane + coenzyme M-coenzyme B heterodisulfide. It functions in the pathway one-carbon metabolism; methyl-coenzyme M reduction; methane from methyl-coenzyme M: step 1/1. Functionally, component of the methyl-coenzyme M reductase (MCR) I that catalyzes the reductive cleavage of methyl-coenzyme M (CoM-S-CH3 or 2-(methylthio)ethanesulfonate) using coenzyme B (CoB or 7-mercaptoheptanoylthreonine phosphate) as reductant which results in the production of methane and the mixed heterodisulfide of CoB and CoM (CoM-S-S-CoB). This is the final step in methanogenesis. This chain is Methyl-coenzyme M reductase II subunit alpha (mrtA), found in Methanothermobacter marburgensis (strain ATCC BAA-927 / DSM 2133 / JCM 14651 / NBRC 100331 / OCM 82 / Marburg) (Methanobacterium thermoautotrophicum).